The chain runs to 370 residues: Heme A synthase (370 aa).

8 consecutive transmembrane segments (helical) span residues 15 to 35 (VRIWLTLVAALIAVMVLVGGA), 104 to 124 (VIGIVYLLPFLWFLWRGAIGP), 129 to 149 (ALWIIFALGALQGAVGWWMVA), 161 to 181 (VRLATHLSLALIIYAAIVWTL), 200 to 220 (ALALLGLTFVQLYAGALVAGL), 261 to 280 (QFDHRMLAYALWTLAALHMI), 293 to 313 (GAVLLFLALTVQAALGIFTVL), and 317 to 337 (PIDLALAHQAMALVVLTLAVL). H264 is a heme binding site. H324 serves as a coordination point for heme.

This sequence belongs to the COX15/CtaA family. Type 2 subfamily. Interacts with CtaB. Requires heme b as cofactor.

The protein resides in the cell membrane. The catalysed reaction is Fe(II)-heme o + 2 A + H2O = Fe(II)-heme a + 2 AH2. It participates in porphyrin-containing compound metabolism; heme A biosynthesis; heme A from heme O: step 1/1. Functionally, catalyzes the conversion of heme O to heme A by two successive hydroxylations of the methyl group at C8. The first hydroxylation forms heme I, the second hydroxylation results in an unstable dihydroxymethyl group, which spontaneously dehydrates, resulting in the formyl group of heme A. This Rhodopseudomonas palustris (strain TIE-1) protein is Heme A synthase.